A 161-amino-acid chain; its full sequence is 3-hydroxyacyl-[acyl-carrier-protein] dehydratase FabZ (161 aa).

Residue His55 is part of the active site.

The protein belongs to the thioester dehydratase family. FabZ subfamily.

It localises to the cytoplasm. The enzyme catalyses a (3R)-hydroxyacyl-[ACP] = a (2E)-enoyl-[ACP] + H2O. Its function is as follows. Involved in unsaturated fatty acids biosynthesis. Catalyzes the dehydration of short chain beta-hydroxyacyl-ACPs and long chain saturated and unsaturated beta-hydroxyacyl-ACPs. In Jannaschia sp. (strain CCS1), this protein is 3-hydroxyacyl-[acyl-carrier-protein] dehydratase FabZ.